The sequence spans 425 residues: Xyloglucan O-acetyltransferase 2 (425 aa).

The Cytoplasmic segment spans residues 1–18; that stretch reads MGSPFKDHHTLHPSLVRK. The chain crosses the membrane as a helical; Signal-anchor for type II membrane protein span at residues 19-38; it reads LIPWTFYAMVPLVLFRVYLY. Residues 39–425 lie on the Lumenal side of the membrane; sequence PYPLHHTTTT…KWEYASRREQ (387 aa). 4 disulfide bridges follow: C68-C118, C89-C154, C98-C398, and C313-C394. An N-linked (GlcNAc...) asparagine glycan is attached at N85. A GDS motif motif is present at residues 141–143; the sequence is GDS. Residue S143 is the Nucleophile of the active site. Residues N183 and N259 are each glycosylated (N-linked (GlcNAc...) asparagine). D393 serves as the catalytic Proton donor. The short motif at 393–396 is the DXXH motif element; that stretch reads DCVH. H396 acts as the Proton acceptor in catalysis.

It belongs to the PC-esterase family. TBL subfamily.

The protein resides in the golgi apparatus membrane. Functionally, xyloglucan acetyltransferase that catalyzes the acetylation of fucosylated Gal residues on xyloglucan side chains. Predominantly catalyze 6-O-monoacetylation of Gal residues in the Fuc-Gal-Xyl trisaccharide side chains of xyloglucan oligomers. This is Xyloglucan O-acetyltransferase 2 from Populus trichocarpa (Western balsam poplar).